Reading from the N-terminus, the 197-residue chain is Small ribosomal subunit protein uS7 (197 aa).

It belongs to the universal ribosomal protein uS7 family.

The chain is Small ribosomal subunit protein uS7 (RPS5) from Cicer arietinum (Chickpea).